The sequence spans 74 residues: Large ribosomal subunit protein uL29 (74 aa).

This sequence belongs to the universal ribosomal protein uL29 family.

The protein is Large ribosomal subunit protein uL29 of Nostoc sp. (strain PCC 7120 / SAG 25.82 / UTEX 2576).